Here is a 1358-residue protein sequence, read N- to C-terminus: DNA-directed RNA polymerase subunit beta (1358 aa).

Belongs to the RNA polymerase beta chain family. In terms of assembly, the RNAP catalytic core consists of 2 alpha, 1 beta, 1 beta' and 1 omega subunit. When a sigma factor is associated with the core the holoenzyme is formed, which can initiate transcription.

The catalysed reaction is RNA(n) + a ribonucleoside 5'-triphosphate = RNA(n+1) + diphosphate. Its function is as follows. DNA-dependent RNA polymerase catalyzes the transcription of DNA into RNA using the four ribonucleoside triphosphates as substrates. The protein is DNA-directed RNA polymerase subunit beta of Methylococcus capsulatus (strain ATCC 33009 / NCIMB 11132 / Bath).